A 128-amino-acid polypeptide reads, in one-letter code: Fluoride-specific ion channel FluC (128 aa).

A run of 4 helical transmembrane segments spans residues 2 to 22, 35 to 55, 67 to 87, and 96 to 116; these read FYSI…RWCL, LGTL…AVVF, LFVI…SVEV, and FGWA…LTAL. The Na(+) site is built by G75 and T78.

The protein belongs to the fluoride channel Fluc/FEX (TC 1.A.43) family.

It is found in the cell inner membrane. It catalyses the reaction fluoride(in) = fluoride(out). With respect to regulation, na(+) is not transported, but it plays an essential structural role and its presence is essential for fluoride channel function. Its function is as follows. Fluoride-specific ion channel. Important for reducing fluoride concentration in the cell, thus reducing its toxicity. This is Fluoride-specific ion channel FluC from Burkholderia cenocepacia (strain ATCC BAA-245 / DSM 16553 / LMG 16656 / NCTC 13227 / J2315 / CF5610) (Burkholderia cepacia (strain J2315)).